The sequence spans 294 residues: Elongation factor Ts (294 aa).

The tract at residues 79–82 is involved in Mg(2+) ion dislocation from EF-Tu; the sequence is TDFV.

It belongs to the EF-Ts family.

The protein localises to the cytoplasm. Associates with the EF-Tu.GDP complex and induces the exchange of GDP to GTP. It remains bound to the aminoacyl-tRNA.EF-Tu.GTP complex up to the GTP hydrolysis stage on the ribosome. This Oceanobacillus iheyensis (strain DSM 14371 / CIP 107618 / JCM 11309 / KCTC 3954 / HTE831) protein is Elongation factor Ts.